Consider the following 130-residue polypeptide: Small ribosomal subunit protein uS8 (130 aa).

The protein belongs to the universal ribosomal protein uS8 family. Part of the 30S ribosomal subunit. Contacts proteins S5 and S12.

Its function is as follows. One of the primary rRNA binding proteins, it binds directly to 16S rRNA central domain where it helps coordinate assembly of the platform of the 30S subunit. The protein is Small ribosomal subunit protein uS8 of Cellvibrio japonicus (strain Ueda107) (Pseudomonas fluorescens subsp. cellulosa).